The following is a 393-amino-acid chain: NAD(P)H-quinone oxidoreductase subunit H, chloroplastic (393 aa).

This sequence belongs to the complex I 49 kDa subunit family. NDH is composed of at least 16 different subunits, 5 of which are encoded in the nucleus.

The protein resides in the plastid. The protein localises to the chloroplast thylakoid membrane. The catalysed reaction is a plastoquinone + NADH + (n+1) H(+)(in) = a plastoquinol + NAD(+) + n H(+)(out). The enzyme catalyses a plastoquinone + NADPH + (n+1) H(+)(in) = a plastoquinol + NADP(+) + n H(+)(out). Functionally, NDH shuttles electrons from NAD(P)H:plastoquinone, via FMN and iron-sulfur (Fe-S) centers, to quinones in the photosynthetic chain and possibly in a chloroplast respiratory chain. The immediate electron acceptor for the enzyme in this species is believed to be plastoquinone. Couples the redox reaction to proton translocation, and thus conserves the redox energy in a proton gradient. This chain is NAD(P)H-quinone oxidoreductase subunit H, chloroplastic, found in Spinacia oleracea (Spinach).